A 279-amino-acid chain; its full sequence is MAMNHPLFSQEQPQSWPWGVAMYANFHYHHHYEKEHMFEKPLTPSDVGKLNRLVIPKQHAERYFPLGAGDAADKGLILSFEDEAGAPWRFRYSYWTSSQSYVLTKGWSRYVKEKRLDAGDVVHFERVRGSFGVGDRLFIGCRRRGDAAAAQTPAPPPAVRVAPAAQNAGEQQPWSPMCYSTSGGGSYPTSPANSYAYRRAADHDHGDMHHADESPRDTDSPSFSAGSAPSRRLRLFGVNLDCGPEPEADTTAAATMYGYMHQQSSYAAMSAVPSYWGNS.

A DNA-binding region (TF-B3) is located at residues 38–144; that stretch reads FEKPLTPSDV…DRLFIGCRRR (107 aa). 2 disordered regions span residues 148 to 182 and 203 to 228; these read AAAQ…YSTS and HDHG…AGSA. Residues 159–168 show a composition bias toward low complexity; it reads VRVAPAAQNA. A compositionally biased stretch (basic and acidic residues) spans 203-219; sequence HDHGDMHHADESPRDTD.

It is found in the nucleus. This is B3 domain-containing protein Os11g0156000 from Oryza sativa subsp. japonica (Rice).